A 1411-amino-acid chain; its full sequence is Protein RhsB (1411 aa).

Tandem repeats lie at residues 330–352 (GKQVRSFTYDDKYRGRMVAHRHT), 353–374 (GRPEIRYRYDSDGRVTEQLNPA), 375–417 (GLSY…EHAD), 418–438 (GSVTQSQFDAVGRLRAQTDAA), 439–460 (GRTTEYSPDVVTGLITRITTPD), 461–481 (GRASAFYYNHHNQLTSATGPD), 482–502 (GLELRREYDELGRLIQETAPD), 503–525 (GDITRYRYDNPHSDLPCATEDAT), 526–546 (GSRKTMTWSRYGQLLSFTDCS), 547–567 (GYVTRYDHDRFGQMTAVHREE), 568–588 (GLSQYRAYDSRGQLIAVKDTQ), 589–609 (GHETRYEYNIAGDLTAVIAPD), 610–629 (GSRNGTQYDAWGKAVRTTQG), 630–650 (GLTRSMEYDAAGRVIRLTSEN), 651–671 (GSHTTFRYDVLDRLIQETGFD), 672–691 (GRTQRYHHDLTGKLIRSEDE), 692–711 (GLVTHWHYDEADRLTHRTVK), 712–734 (GETAERWQYDERGWLTDISHISE), 735–758 (GHRVAVHYRYDEKGRLTGERQTVH), 808–828 (GDTPLVEYTRDRLHRETLRSF), 829–850 (GRYELTTAYTPAGQLQSQHLNS), 851–871 (LLSDRDYTWNDNGELIRISSP), 872–894 (RQTRSYSYSTTGRLTGVHTTAAN), 895–930 (LDIRIPYATDPAGNRLPDPELHPDSTLSMWPDNRIA), 931–959 (RDAHYLYRYDRHGRLTEKTDLIPEGVIRT), 960–984 (DDERTHRYHYDSQHRLVHYTRTQYE), 985–1019 (EPLVESRYLYDPLGRRVAKRVWRRERDLTGWMSLS), and 1162–1186 (GATAWCAEYDEWGNLLNEENPHQLQ). The segment at 330–1186 (GKQVRSFTYD…LNEENPHQLQ (857 aa)) is 28 X approximate tandem repeats.

Belongs to the RHS family.

Functionally, rhs elements have a nonessential function. They may play an important role in the natural ecology of the cell. This is Protein RhsB (rhsB) from Escherichia coli (strain K12).